The primary structure comprises 172 residues: Photosystem I assembly protein Ycf3 (172 aa).

TPR repeat units follow at residues 35–70 (AFTY…EIDP), 74–107 (SYIL…NPFL), and 122–155 (GERA…TPGN).

This sequence belongs to the Ycf3 family.

It localises to the plastid. The protein resides in the chloroplast thylakoid membrane. Essential for the assembly of the photosystem I (PSI) complex. May act as a chaperone-like factor to guide the assembly of the PSI subunits. This Dioscorea elephantipes (Elephant's foot yam) protein is Photosystem I assembly protein Ycf3.